The primary structure comprises 332 residues: tRNA U34 carboxymethyltransferase (332 aa).

Carboxy-S-adenosyl-L-methionine-binding positions include Lys96, Trp110, Lys115, Gly135, 157-159, 190-191, Met205, Tyr209, and Arg324; these read DPT and IE.

This sequence belongs to the class I-like SAM-binding methyltransferase superfamily. CmoB family. Homotetramer.

It carries out the reaction carboxy-S-adenosyl-L-methionine + 5-hydroxyuridine(34) in tRNA = 5-carboxymethoxyuridine(34) in tRNA + S-adenosyl-L-homocysteine + H(+). Its function is as follows. Catalyzes carboxymethyl transfer from carboxy-S-adenosyl-L-methionine (Cx-SAM) to 5-hydroxyuridine (ho5U) to form 5-carboxymethoxyuridine (cmo5U) at position 34 in tRNAs. This is tRNA U34 carboxymethyltransferase from Alteromonas mediterranea (strain DSM 17117 / CIP 110805 / LMG 28347 / Deep ecotype).